Here is a 340-residue protein sequence, read N- to C-terminus: Ferrochelatase (340 aa).

Residues histidine 189 and glutamate 292 each contribute to the Fe cation site.

Belongs to the ferrochelatase family.

The protein localises to the cytoplasm. The catalysed reaction is heme b + 2 H(+) = protoporphyrin IX + Fe(2+). The protein operates within porphyrin-containing compound metabolism; protoheme biosynthesis; protoheme from protoporphyrin-IX: step 1/1. Its function is as follows. Catalyzes the ferrous insertion into protoporphyrin IX. In Pseudomonas paraeruginosa (strain DSM 24068 / PA7) (Pseudomonas aeruginosa (strain PA7)), this protein is Ferrochelatase.